Reading from the N-terminus, the 305-residue chain is Ribonucleoside-diphosphate reductase small subunit (305 aa).

Positions 64, 94, and 97 each coordinate Fe cation. Tyr101 is an active-site residue. The helical transmembrane segment at 150–170 (ILMFLIVEGIYFISSFYSISL) threads the bilayer. Positions 157, 191, and 194 each coordinate Fe cation.

This sequence belongs to the ribonucleoside diphosphate reductase small chain family. In terms of assembly, heterotetramer composed of a homodimer of the large subunit (R1) and a homodimer of the small subunit (R2). Larger multisubunit protein complex are also active, composed of (R1)n(R2)n. The cofactor is Fe cation.

Its subcellular location is the host membrane. It carries out the reaction a 2'-deoxyribonucleoside 5'-diphosphate + [thioredoxin]-disulfide + H2O = a ribonucleoside 5'-diphosphate + [thioredoxin]-dithiol. Ribonucleoside-diphosphate reductase holoenzyme provides the precursors necessary for viral DNA synthesis. Allows virus growth in non-dividing cells, as well as reactivation from latency in infected hosts. Catalyzes the biosynthesis of deoxyribonucleotides from the corresponding ribonucleotides. The sequence is that of Ribonucleoside-diphosphate reductase small subunit from Homo sapiens (Human).